The following is a 201-amino-acid chain: Recombination protein RecR (201 aa).

A C4-type zinc finger spans residues 60 to 75 (CSVCGNIDTTDPCSIC). Residues 83–178 (GTIIVVEDIS…KITRLAHGVP (96 aa)) form the Toprim domain.

This sequence belongs to the RecR family.

Its function is as follows. May play a role in DNA repair. It seems to be involved in an RecBC-independent recombinational process of DNA repair. It may act with RecF and RecO. This chain is Recombination protein RecR, found in Bartonella bacilliformis (strain ATCC 35685 / KC583 / Herrer 020/F12,63).